A 187-amino-acid polypeptide reads, in one-letter code: Holliday junction resolvase (187 aa).

This sequence belongs to the RuvC family. Poxviruses-type subfamily. Mg(2+) is required as a cofactor. In terms of processing, acylated by palmitic acid group(s).

The protein resides in the membrane. In terms of biological role, nuclease that specifically cleaves and resolves four-way DNA Holliday junctions into linear duplex products. The chain is Holliday junction resolvase from Vaccinia virus (strain Ankara) (VACV).